We begin with the raw amino-acid sequence, 637 residues long: MSIATATFAFSLFATIAFAVPPETPRIELQAERGLGDKSYAPWQVDCPSNVTWIRNATTGLGSGERAYIEAREKLVQPVIEQMMAARGLETPPRTPNIGVALSGGGYRAMLTGLGGIMGMMNESTEASESETGGWLDGVSYWAGLSGGSWATGTFMSNGGQLPTNLLENLWNIDSNLVFPDDDKLSFYTELYTETNAKSDLGFPIQITDVWGLAIGSHVLPERYQLSNTPNLTFSSLPSVVSALGNASLPMPIIIAADRKRREAGELVIAENATVWEFTPYEFGSWAFGSQYKSPGAFTPIEYLGTSVDDGSPNGTCWKGFDQLSFVMGTSATLFNGAFLELNGTDSGLLTNLITAFLADLGEDQADISRIPNTFSNYNSGENPIYNLTYITLVDAGETNQNIPLEPLLVPTRDVDAIVAFDSSYDTDYIWPNGTALRTTYERAKVLAEHENTRVLMPEVPSMNGFVNGGYNSRPTFFGCNDTTTPLIIYVPSYPWSFAANTSTYQLSYENDEANEMLLNGMRSLTLNHSVPTWPTCFACALTDRSFMYTSENRSTTCQKCFDTWCWAGDDNTTEPATYEPVINSVPPWLVANNLSIGVADAPASNESTAGTASSGAAKADVSMGMVALAAGLGLML.

A signal peptide spans 1-19; it reads MSIATATFAFSLFATIAFA. In terms of domain architecture, PLA2c spans 46 to 572; the sequence is DCPSNVTWIR…DTWCWAGDDN (527 aa). Asn-50, Asn-56, Asn-122, Asn-231, Asn-246, Asn-272, Asn-314, Asn-343, Asn-387, Asn-433, Asn-481, Asn-501, Asn-528, Asn-553, Asn-572, Asn-594, and Asn-606 each carry an N-linked (GlcNAc...) asparagine glycan.

It belongs to the lysophospholipase family. N-glycosylated.

The protein resides in the secreted. It is found in the cell membrane. It catalyses the reaction a 1-acyl-sn-glycero-3-phosphocholine + H2O = sn-glycerol 3-phosphocholine + a fatty acid + H(+). Inhibited by Fe(3+) ion. Its function is as follows. Exhibits phospholipase B (PLB), lysophospholipase (LPL) and lysophospholipase/transacylase (LPTA) activities. The polypeptide is Phospholipase B (PLB1) (Cryptococcus neoformans var. grubii serotype A (strain H99 / ATCC 208821 / CBS 10515 / FGSC 9487) (Filobasidiella neoformans var. grubii)).